Consider the following 77-residue polypeptide: Large ribosomal subunit protein bL28 (77 aa).

It belongs to the bacterial ribosomal protein bL28 family.

The sequence is that of Large ribosomal subunit protein bL28 from Ralstonia nicotianae (strain ATCC BAA-1114 / GMI1000) (Ralstonia solanacearum).